The sequence spans 348 residues: Nicotinate-nucleotide--dimethylbenzimidazole phosphoribosyltransferase (348 aa).

The Proton acceptor role is filled by E316.

It belongs to the CobT family.

It carries out the reaction 5,6-dimethylbenzimidazole + nicotinate beta-D-ribonucleotide = alpha-ribazole 5'-phosphate + nicotinate + H(+). It participates in nucleoside biosynthesis; alpha-ribazole biosynthesis; alpha-ribazole from 5,6-dimethylbenzimidazole: step 1/2. Catalyzes the synthesis of alpha-ribazole-5'-phosphate from nicotinate mononucleotide (NAMN) and 5,6-dimethylbenzimidazole (DMB). In Xanthomonas oryzae pv. oryzae (strain PXO99A), this protein is Nicotinate-nucleotide--dimethylbenzimidazole phosphoribosyltransferase.